Consider the following 188-residue polypeptide: Shikimate kinase (188 aa).

21-26 (GAGKTT) is a binding site for ATP. Threonine 25 is a binding site for Mg(2+). Substrate contacts are provided by aspartate 43, arginine 67, and glycine 90. Position 130 (arginine 130) interacts with ATP. Residue arginine 148 participates in substrate binding.

It belongs to the shikimate kinase family. As to quaternary structure, monomer. The cofactor is Mg(2+).

The protein localises to the cytoplasm. The catalysed reaction is shikimate + ATP = 3-phosphoshikimate + ADP + H(+). It participates in metabolic intermediate biosynthesis; chorismate biosynthesis; chorismate from D-erythrose 4-phosphate and phosphoenolpyruvate: step 5/7. Functionally, catalyzes the specific phosphorylation of the 3-hydroxyl group of shikimic acid using ATP as a cosubstrate. The sequence is that of Shikimate kinase from Geobacillus kaustophilus (strain HTA426).